The following is a 353-amino-acid chain: uncharacterized protein (353 aa).

5 residues coordinate Mn(2+): aspartate 212, aspartate 223, histidine 287, glutamate 316, and glutamate 330.

The protein belongs to the peptidase M24B family. Mn(2+) is required as a cofactor.

This is an uncharacterized protein from Bacillus subtilis (strain 168).